Reading from the N-terminus, the 64-residue chain is uncharacterized protein (64 aa).

The protein localises to the host cytoplasm. This is an uncharacterized protein from Enterobacteriaceae (Bacteriophage Mu).